A 152-amino-acid polypeptide reads, in one-letter code: Xanthine-guanine phosphoribosyltransferase (152 aa).

5-phospho-alpha-D-ribose 1-diphosphate-binding positions include 37 to 38 (RG), R69, and 88 to 96 (DDLVDTGGT). R69 is a GMP binding site. Mg(2+) is bound at residue D89. 2 residues coordinate guanine: D92 and I135. 2 residues coordinate xanthine: D92 and I135. Residues 92–96 (DTGGT) and 134–135 (WI) contribute to the GMP site.

Belongs to the purine/pyrimidine phosphoribosyltransferase family. XGPT subfamily. Homotetramer. It depends on Mg(2+) as a cofactor.

The protein resides in the cell inner membrane. The catalysed reaction is GMP + diphosphate = guanine + 5-phospho-alpha-D-ribose 1-diphosphate. The enzyme catalyses XMP + diphosphate = xanthine + 5-phospho-alpha-D-ribose 1-diphosphate. It carries out the reaction IMP + diphosphate = hypoxanthine + 5-phospho-alpha-D-ribose 1-diphosphate. The protein operates within purine metabolism; GMP biosynthesis via salvage pathway; GMP from guanine: step 1/1. Its pathway is purine metabolism; XMP biosynthesis via salvage pathway; XMP from xanthine: step 1/1. Purine salvage pathway enzyme that catalyzes the transfer of the ribosyl-5-phosphate group from 5-phospho-alpha-D-ribose 1-diphosphate (PRPP) to the N9 position of the 6-oxopurines guanine and xanthine to form the corresponding ribonucleotides GMP (guanosine 5'-monophosphate) and XMP (xanthosine 5'-monophosphate), with the release of PPi. To a lesser extent, also acts on hypoxanthine. The sequence is that of Xanthine-guanine phosphoribosyltransferase from Pectobacterium carotovorum subsp. carotovorum (strain PC1).